The chain runs to 393 residues: Protein TsgA (393 aa).

The next 12 helical transmembrane spans lie at W11–M31, F51–P71, F78–L98, A101–V121, L134–F154, W162–G182, I206–I226, T245–L265, I273–P293, A297–L317, F332–V352, and L361–V381.

Belongs to the major facilitator superfamily. TsgA family.

The protein localises to the cell inner membrane. This is Protein TsgA from Escherichia coli O139:H28 (strain E24377A / ETEC).